A 230-amino-acid chain; its full sequence is Dephospho-CoA kinase (230 aa).

In terms of domain architecture, DPCK spans 3-206; it reads LVGLTGGIAS…EPLTWKERLR (204 aa). ATP is bound at residue 8-15; sequence GGIASGKS.

This sequence belongs to the CoaE family.

It carries out the reaction 3'-dephospho-CoA + ATP = ADP + CoA + H(+). It participates in cofactor biosynthesis; coenzyme A biosynthesis; CoA from (R)-pantothenate: step 5/5. In terms of biological role, catalyzes the phosphorylation of the 3'-hydroxyl group of dephosphocoenzyme A to form coenzyme A. The protein is Dephospho-CoA kinase of Oryza sativa subsp. japonica (Rice).